A 485-amino-acid chain; its full sequence is Amidophosphoribosyltransferase, chloroplastic (485 aa).

Residues 1-18 constitute a chloroplast transit peptide; it reads KTTNTFASVNDDEKPREE. C19 serves as the catalytic Nucleophile. Residues 19 to 237 form the Glutamine amidotransferase type-2 domain; it reads CGVVGIYGDP…PGEVVVVDHT (219 aa). Position 253 (C253) interacts with [4Fe-4S] cluster. Residues S300, D362, and D363 each coordinate Mg(2+). [4Fe-4S] cluster-binding residues include C399, C450, and C453.

It in the C-terminal section; belongs to the purine/pyrimidine phosphoribosyltransferase family. Mg(2+) serves as cofactor. The cofactor is [4Fe-4S] cluster.

The protein localises to the plastid. It localises to the chloroplast. It carries out the reaction 5-phospho-beta-D-ribosylamine + L-glutamate + diphosphate = 5-phospho-alpha-D-ribose 1-diphosphate + L-glutamine + H2O. It functions in the pathway purine metabolism; IMP biosynthesis via de novo pathway; N(1)-(5-phospho-D-ribosyl)glycinamide from 5-phospho-alpha-D-ribose 1-diphosphate: step 1/2. The chain is Amidophosphoribosyltransferase, chloroplastic (PUR1) from Vigna aconitifolia (Moth bean).